Here is a 65-residue protein sequence, read N- to C-terminus: Large ribosomal subunit protein bL35 (65 aa).

Over residues 1 to 15 the composition is skewed to basic residues; that stretch reads MPKMKTKKSAAKRFQ. Residues 1-26 form a disordered region; that stretch reads MPKMKTKKSAAKRFQVRGSGSIKRGQ.

This sequence belongs to the bacterial ribosomal protein bL35 family.

This Bordetella avium (strain 197N) protein is Large ribosomal subunit protein bL35.